The following is a 264-amino-acid chain: Teichoic acids export ATP-binding protein TagH (264 aa).

In terms of domain architecture, ABC transporter spans Val-5 to Lys-243. Residue Gly-57 to Ser-64 participates in ATP binding.

It belongs to the ABC transporter superfamily. Teichoic acids exporter (TC 3.A.1.104.1) family. The complex is composed of two ATP-binding proteins (TagH) and two transmembrane proteins (TagG).

The protein localises to the cell membrane. It catalyses the reaction ATP + H2O + teichoic acidSide 1 = ADP + phosphate + teichoic acidSide 2.. Part of the ABC transporter complex TagGH involved in teichoic acids export. Responsible for energy coupling to the transport system. The chain is Teichoic acids export ATP-binding protein TagH from Staphylococcus aureus (strain Mu50 / ATCC 700699).